The following is a 658-amino-acid chain: Translin-associated factor X-interacting protein 1 (658 aa).

2 coiled-coil regions span residues E144–Y184 and A230–L295.

As to quaternary structure, interacts with TSNAX.

It is found in the cytoplasm. The protein localises to the perinuclear region. Functionally, possible role in spermatogenesis. This chain is Translin-associated factor X-interacting protein 1, found in Homo sapiens (Human).